Reading from the N-terminus, the 915-residue chain is Clathrin coat assembly protein AP180 (915 aa).

The region spanning 14-145 is the ENTH domain; that stretch reads QYSVTGSAVA…FSYRQMAFDF (132 aa). 3 disordered regions span residues 285 to 326, 391 to 425, and 497 to 522; these read LEGK…DTSP, SVPS…ATTA, and PETS…PSPA. Phosphoserine occurs at positions 296, 300, and 306. The segment covering 302–324 has biased composition (polar residues); sequence LSKSSPATTVTSPNSTPAKTIDT. An O-linked (GlcNAc) threonine glycan is attached at threonine 310. Serine 313 is subject to Phosphoserine. Residue threonine 317 is modified to Phosphothreonine. 2 stretches are compositionally biased toward low complexity: residues 410–425 and 500–511; these read TTTT…ATTA and SAPVVTPTASTA. Residues 512–522 are compositionally biased toward pro residues; it reads PPVPATAPSPA. Residues serine 594, serine 600, proline 627, serine 640, and serine 646 each carry the phosphoserine modification. Over residues 720 to 735 the composition is skewed to low complexity; the sequence is TTPSTSSSSSFDPSGD. Positions 720-765 are disordered; that stretch reads TTPSTSSSSSFDPSGDLLMPTMAPSGQPAPVSMVPPSPAMSASKGL. Serine 775 bears the Phosphoserine mark. The disordered stretch occupies residues 817–855; the sequence is SAGVPPQGTVPPTSSVPPGAGAPSVGQPGAGYGMPPAGT. Arginine 873 is modified (asymmetric dimethylarginine; alternate). Arginine 873 bears the Omega-N-methylarginine; alternate mark. A disordered region spans residues 875–915; that stretch reads PFGAAAVPGTQLSPSPTPATQSPKKPPAKDPLADLNIKDFL. Polar residues predominate over residues 884-896; it reads TQLSPSPTPATQS. Over residues 901-915 the composition is skewed to basic and acidic residues; it reads PAKDPLADLNIKDFL.

Belongs to the PICALM/SNAP91 family. In terms of assembly, binds AP2A2. Interacts with AP2B1; clathrin competes with SNAP91. Post-translationally, thr-310 can be modified by the addition of N-acetylglucosamine which can be further phosphorylated. The form with phosphorylated O-linked N-acetylglucosamine is predominant in brain synaptosomes. There is no evidence for direct Thr-310 phosphorylation.

The protein localises to the cell membrane. Its subcellular location is the membrane. It localises to the coated pit. Adaptins are components of the adapter complexes which link clathrin to receptors in coated vesicles. Clathrin-associated protein complexes are believed to interact with the cytoplasmic tails of membrane proteins, leading to their selection and concentration. Binding of AP180 to clathrin triskelia induces their assembly into 60-70 nm coats. The polypeptide is Clathrin coat assembly protein AP180 (Snap91) (Rattus norvegicus (Rat)).